Reading from the N-terminus, the 305-residue chain is MSRPRKKGRDVHGVFLLDKPQGMSSNDILQKVKRLFQANKAGHTGALDPLATGMLPICLGEATKFSQFLLDSDKRYQVTAKLGKRTDTSDAEGQVVETRAVNVGEAEIITALEQFRGDILQVPTMFSALKHNGKPLYEYARQGITVEREARPITIFELRFIEYAAPYLTLEVHCSKGTYIRTLVDDLGEVLGCGAHVTVLRRLAVANYPIEAMMSYADLQNLSENQPLEELDKYLLPLDTAVESLPKLNLTAEQTKAVGFGQRVKFENNDQIYGQVRLFSHNMQFLGVAEITTDNVIRPSRMVNI.

The active-site Nucleophile is the aspartate 48.

It belongs to the pseudouridine synthase TruB family. Type 1 subfamily.

It carries out the reaction uridine(55) in tRNA = pseudouridine(55) in tRNA. Responsible for synthesis of pseudouridine from uracil-55 in the psi GC loop of transfer RNAs. The polypeptide is tRNA pseudouridine synthase B (Actinobacillus pleuropneumoniae serotype 5b (strain L20)).